A 251-amino-acid chain; its full sequence is Regulator of G-protein signaling 9-binding protein B (251 aa).

Residues Met1–Gln230 are Cytoplasmic-facing. Coiled coils occupy residues His52–Arg94 and Ala158–Asn187. Residues Leu231–Ile250 form a helical; Anchor for type IV membrane protein membrane-spanning segment. Residue Leu251 is a topological domain, extracellular.

Belongs to the RGS7BP/RGS9BP family.

The protein resides in the membrane. In terms of biological role, regulator of G protein-coupled receptor (GPCR) signaling. Probably acts by regulating the activity of some 'R7' family protein (RGS6, RGS7, RGS9 and/or RGS11). The sequence is that of Regulator of G-protein signaling 9-binding protein B (rgs9bp-b) from Xenopus laevis (African clawed frog).